The following is a 353-amino-acid chain: Photosystem II D2 protein (353 aa).

An N-acetylthreonine modification is found at threonine 2. Threonine 2 is modified (phosphothreonine). The chain crosses the membrane as a helical span at residues 41–61 (CAYFALGGWFTGTTFVTSWYT). Histidine 118 is a chlorophyll a binding site. The helical transmembrane segment at 125–141 (GFMLRQFELARSVQLRP) threads the bilayer. Residues glutamine 130 and asparagine 143 each contribute to the pheophytin a site. Residues 153 to 166 (VFVSVFLIYPLGQS) traverse the membrane as a helical segment. Histidine 198 lines the chlorophyll a pocket. Residues 208–228 (AALLCAIHGATVENTLFEDGD) form a helical membrane-spanning segment. Residues histidine 215 and phenylalanine 262 each contribute to the a plastoquinone site. Residue histidine 215 coordinates Fe cation. A Fe cation-binding site is contributed by histidine 269. Residues 279–295 (GLWMSALGVVGLALNLR) form a helical membrane-spanning segment.

It belongs to the reaction center PufL/M/PsbA/D family. PSII is composed of 1 copy each of membrane proteins PsbA, PsbB, PsbC, PsbD, PsbE, PsbF, PsbH, PsbI, PsbJ, PsbK, PsbL, PsbM, PsbT, PsbX, PsbY, PsbZ, Psb30/Ycf12, at least 3 peripheral proteins of the oxygen-evolving complex and a large number of cofactors. It forms dimeric complexes. It depends on The D1/D2 heterodimer binds P680, chlorophylls that are the primary electron donor of PSII, and subsequent electron acceptors. It shares a non-heme iron and each subunit binds pheophytin, quinone, additional chlorophylls, carotenoids and lipids. There is also a Cl(-1) ion associated with D1 and D2, which is required for oxygen evolution. The PSII complex binds additional chlorophylls, carotenoids and specific lipids. as a cofactor.

It localises to the plastid. The protein resides in the chloroplast thylakoid membrane. It catalyses the reaction 2 a plastoquinone + 4 hnu + 2 H2O = 2 a plastoquinol + O2. Functionally, photosystem II (PSII) is a light-driven water:plastoquinone oxidoreductase that uses light energy to abstract electrons from H(2)O, generating O(2) and a proton gradient subsequently used for ATP formation. It consists of a core antenna complex that captures photons, and an electron transfer chain that converts photonic excitation into a charge separation. The D1/D2 (PsbA/PsbD) reaction center heterodimer binds P680, the primary electron donor of PSII as well as several subsequent electron acceptors. D2 is needed for assembly of a stable PSII complex. The protein is Photosystem II D2 protein of Pelargonium hortorum (Common geranium).